The following is a 495-amino-acid chain: Telomere-binding protein subunit alpha (495 aa).

A compositionally biased stretch (polar residues) spans 1 to 13 (MSTAAKQNRSTSR). Positions 1-31 (MSTAAKQNRSTSRVSKKKTAAPKEGAAKKSD) are disordered.

Belongs to the telombin family. Heterodimer of an alpha and a beta subunit.

The protein resides in the nucleus. The protein localises to the chromosome. It localises to the telomere. In terms of biological role, may function as protective capping of the single-stranded telomeric overhang. May also participate in telomere length regulation during DNA replication. Binds specifically to the T4G4-containing extension on the 3'strand and protects this region of the telomere from nuclease digestion and chemical modification. This is Telomere-binding protein subunit alpha (MAC-56A) from Sterkiella nova (Ciliate).